Reading from the N-terminus, the 360-residue chain is UDP-N-acetylglucosamine--N-acetylmuramyl-(pentapeptide) pyrophosphoryl-undecaprenol N-acetylglucosamine transferase (360 aa).

Residues Thr-13–Gly-15, Arg-164, Ser-192, and Gln-293 each bind UDP-N-acetyl-alpha-D-glucosamine.

Belongs to the glycosyltransferase 28 family. MurG subfamily.

The protein localises to the cell inner membrane. It carries out the reaction di-trans,octa-cis-undecaprenyl diphospho-N-acetyl-alpha-D-muramoyl-L-alanyl-D-glutamyl-meso-2,6-diaminopimeloyl-D-alanyl-D-alanine + UDP-N-acetyl-alpha-D-glucosamine = di-trans,octa-cis-undecaprenyl diphospho-[N-acetyl-alpha-D-glucosaminyl-(1-&gt;4)]-N-acetyl-alpha-D-muramoyl-L-alanyl-D-glutamyl-meso-2,6-diaminopimeloyl-D-alanyl-D-alanine + UDP + H(+). It participates in cell wall biogenesis; peptidoglycan biosynthesis. Cell wall formation. Catalyzes the transfer of a GlcNAc subunit on undecaprenyl-pyrophosphoryl-MurNAc-pentapeptide (lipid intermediate I) to form undecaprenyl-pyrophosphoryl-MurNAc-(pentapeptide)GlcNAc (lipid intermediate II). The polypeptide is UDP-N-acetylglucosamine--N-acetylmuramyl-(pentapeptide) pyrophosphoryl-undecaprenol N-acetylglucosamine transferase (Chromobacterium violaceum (strain ATCC 12472 / DSM 30191 / JCM 1249 / CCUG 213 / NBRC 12614 / NCIMB 9131 / NCTC 9757 / MK)).